The primary structure comprises 97 residues: Citrate lyase acyl carrier protein (97 aa).

Serine 14 bears the O-(phosphoribosyl dephospho-coenzyme A)serine mark.

This sequence belongs to the CitD family. In terms of assembly, oligomer with a subunit composition of (alpha,beta,gamma)6.

Its subcellular location is the cytoplasm. In terms of biological role, covalent carrier of the coenzyme of citrate lyase. This is Citrate lyase acyl carrier protein from Yersinia enterocolitica serotype O:8 / biotype 1B (strain NCTC 13174 / 8081).